The primary structure comprises 247 residues: Cytochrome c oxidase subunit 2 (247 aa).

Over 12–38 (DVPTPWGLYFQDSSTPNQEGIIELHDN) the chain is Mitochondrial intermembrane. The helical transmembrane segment at 39-59 (IMFYLVLILCTVSWLLFSIVK) threads the bilayer. At 60–78 (DSSKNPLPHKYLVHGQTIE) the chain is on the mitochondrial matrix side. Residues 79 to 101 (IIWTILPAVVLLIIAFPSFILLY) form a helical membrane-spanning segment. The Mitochondrial intermembrane segment spans residues 102–247 (LCDEVISPAM…KEFLTWLNEQ (146 aa)). 6 residues coordinate Cu cation: histidine 182, cysteine 217, glutamate 219, cysteine 221, histidine 225, and methionine 228. Glutamate 219 is a Mg(2+) binding site.

This sequence belongs to the cytochrome c oxidase subunit 2 family. Component of the cytochrome c oxidase (complex IV, CIV), a multisubunit enzyme composed of a catalytic core of 3 subunits and several supernumerary subunits. The complex exists as a monomer or a dimer and forms supercomplexes (SCs) in the inner mitochondrial membrane with ubiquinol-cytochrome c oxidoreductase (cytochrome b-c1 complex, complex III, CIII). Requires Cu cation as cofactor. Post-translationally, the signal sequence of COX2 is processed by IMP1.

Its subcellular location is the mitochondrion inner membrane. The enzyme catalyses 4 Fe(II)-[cytochrome c] + O2 + 8 H(+)(in) = 4 Fe(III)-[cytochrome c] + 2 H2O + 4 H(+)(out). Functionally, component of the cytochrome c oxidase, the last enzyme in the mitochondrial electron transport chain which drives oxidative phosphorylation. The respiratory chain contains 3 multisubunit complexes succinate dehydrogenase (complex II, CII), ubiquinol-cytochrome c oxidoreductase (cytochrome b-c1 complex, complex III, CIII) and cytochrome c oxidase (complex IV, CIV), that cooperate to transfer electrons derived from NADH and succinate to molecular oxygen, creating an electrochemical gradient over the inner membrane that drives transmembrane transport and the ATP synthase. Cytochrome c oxidase is the component of the respiratory chain that catalyzes the reduction of oxygen to water. Electrons originating from reduced cytochrome c in the intermembrane space (IMS) are transferred via the dinuclear copper A center (CU(A)) of subunit 2 and heme A of subunit 1 to the active site in subunit 1, a binuclear center (BNC) formed by heme A3 and copper B (CU(B)). The BNC reduces molecular oxygen to 2 water molecules using 4 electrons from cytochrome c in the IMS and 4 protons from the mitochondrial matrix. The polypeptide is Cytochrome c oxidase subunit 2 (COX2) (Cyberlindnera mrakii (Yeast)).